The primary structure comprises 193 residues: Selenoprotein S A (193 aa).

The chain crosses the membrane as a helical span at residues Trp29 to Ile49. The span at Ile114–Ser125 shows a compositional bias: basic and acidic residues. Positions Ile114 to Gly193 are disordered. The span at Ser137 to Pro153 shows a compositional bias: low complexity. Sec192 is a non-standard amino acid (selenocysteine).

This sequence belongs to the selenoprotein S family.

The protein localises to the endoplasmic reticulum membrane. Its subcellular location is the cytoplasm. Its function is as follows. Involved in the degradation process of misfolded endoplasmic reticulum (ER) luminal proteins. Participates in the transfer of misfolded proteins from the ER to the cytosol, where they are destroyed by the proteasome in a ubiquitin-dependent manner. This is Selenoprotein S A (vimp-a) from Xenopus laevis (African clawed frog).